The primary structure comprises 101 residues: NAD(P)H-quinone oxidoreductase subunit 4L, chloroplastic (101 aa).

Transmembrane regions (helical) follow at residues 2–22, 32–52, and 61–81; these read ILEHVLVLSAYLFLIGLYGLI, MCLELILNAVNMNFVTFSDFF, and IFCIFVIAIAAAEAAIGLAIV.

It belongs to the complex I subunit 4L family. In terms of assembly, NDH is composed of at least 16 different subunits, 5 of which are encoded in the nucleus.

It is found in the plastid. Its subcellular location is the chloroplast thylakoid membrane. It catalyses the reaction a plastoquinone + NADH + (n+1) H(+)(in) = a plastoquinol + NAD(+) + n H(+)(out). The catalysed reaction is a plastoquinone + NADPH + (n+1) H(+)(in) = a plastoquinol + NADP(+) + n H(+)(out). Functionally, NDH shuttles electrons from NAD(P)H:plastoquinone, via FMN and iron-sulfur (Fe-S) centers, to quinones in the photosynthetic chain and possibly in a chloroplast respiratory chain. The immediate electron acceptor for the enzyme in this species is believed to be plastoquinone. Couples the redox reaction to proton translocation, and thus conserves the redox energy in a proton gradient. This Crucihimalaya wallichii (Rock-cress) protein is NAD(P)H-quinone oxidoreductase subunit 4L, chloroplastic.